Here is a 305-residue protein sequence, read N- to C-terminus: Small ribosomal subunit protein bS1B (305 aa).

3 consecutive S1 motif domains span residues 29–98 (GQTV…LSRR), 116–180 (GKTL…LTQR), and 194–262 (GNIY…LSTR).

The protein belongs to the bacterial ribosomal protein bS1 family.

Binds mRNA. The protein is Small ribosomal subunit protein bS1B (rps1b) of Synechocystis sp. (strain ATCC 27184 / PCC 6803 / Kazusa).